A 370-amino-acid polypeptide reads, in one-letter code: L-lactate oxidase (370 aa).

The FMN hydroxy acid dehydrogenase domain maps to Asp8–Gly367. Position 34 (Tyr34) interacts with pyruvate. FMN contacts are provided by residues Pro87–Ala89, Ser116, and Gln136. Tyr138 provides a ligand contact to pyruvate. Thr164 contacts FMN. Residue Arg173 coordinates pyruvate. Residues Lys238 and Ser260 each contribute to the FMN site. Residues His262 and Arg265 each coordinate pyruvate. Catalysis depends on His262, which acts as the Proton acceptor. FMN contacts are provided by residues Asp293–Arg297 and Arg317.

The protein belongs to the FMN-dependent alpha-hydroxy acid dehydrogenase family. As to quaternary structure, homotetramer. It depends on FMN as a cofactor.

It catalyses the reaction (S)-lactate + O2 = pyruvate + H2O2. The catalysed reaction is a (2S)-2-hydroxycarboxylate + O2 = a 2-oxocarboxylate + H2O2. The enzyme catalyses glycolate + O2 = glyoxylate + H2O2. It carries out the reaction 2-hydroxyoctadecanoate + O2 = 2-oxooctadecanoate + H2O2. In terms of biological role, catalyzes the oxidation of (S)-lactate (L-lactate) to pyruvate, with a reduction of O2 to H2O2. Is also able to use glycolate and to a lesser extent 2-hydroxyoctadecanoate as substrate. The protein is L-lactate oxidase of Roseobacter sp. (strain GAI101).